Consider the following 481-residue polypeptide: Glutamyl-tRNA(Gln) amidotransferase subunit A (481 aa).

Residues lysine 74 and serine 149 each act as charge relay system in the active site. Serine 173 (acyl-ester intermediate) is an active-site residue.

It belongs to the amidase family. GatA subfamily. In terms of assembly, heterotrimer of A, B and C subunits.

The enzyme catalyses L-glutamyl-tRNA(Gln) + L-glutamine + ATP + H2O = L-glutaminyl-tRNA(Gln) + L-glutamate + ADP + phosphate + H(+). Allows the formation of correctly charged Gln-tRNA(Gln) through the transamidation of misacylated Glu-tRNA(Gln) in organisms which lack glutaminyl-tRNA synthetase. The reaction takes place in the presence of glutamine and ATP through an activated gamma-phospho-Glu-tRNA(Gln). In Francisella tularensis subsp. mediasiatica (strain FSC147), this protein is Glutamyl-tRNA(Gln) amidotransferase subunit A.